The following is a 334-amino-acid chain: MARKDVASMFAAALFIGAFAAVPTSVQSIGVCYGVIGNNLPSRSDVVQLYRSKGINGMRIYFADGQALSALRNSGIGLILDIGNDQLANIAASTSNAASWVQNNVRPYYPAVNIKYIAAGNEVQGGATQSILPAMRNLNAALSAAGLGAIKVSTSIRFDEVANSFPPSAGVFKNAYMTDVARLLASTGAPLLANVYPYFAYRDNPGSISLNYATFQPGTTVRDQNNGLTYTSLFDAMVDAVYAALEKAGAPAVKVVVSESGWPSAGGFAASAGNARTYNQGLINHVGGGTPKKREALETYIFAMFNENQKTGDATERSFGLFNPDKSPAYNIQF.

The signal sequence occupies residues 1-28 (MARKDVASMFAAALFIGAFAAVPTSVQS). Glu-122 (proton donor) is an active-site residue. Catalysis depends on Glu-259, which acts as the Nucleophile.

Belongs to the glycosyl hydrolase 17 family.

It carries out the reaction Hydrolysis of (1-&gt;3)-beta-D-glucosidic linkages in (1-&gt;3)-beta-D-glucans.. May provide a degree of protection against microbial invasion of germinated barley grain through its ability to degrade fungal cell wall polysaccharides. Hydrolyzes laminarin in vitro. The sequence is that of Glucan endo-1,3-beta-glucosidase GII from Hordeum vulgare (Barley).